A 402-amino-acid chain; its full sequence is Deoxyguanosinetriphosphate triphosphohydrolase-like protein (402 aa).

The HD domain maps to 73–217 (RLTHTIEVAQ…AAIADDIAYN (145 aa)).

Belongs to the dGTPase family. Type 2 subfamily.

This Brucella suis (strain ATCC 23445 / NCTC 10510) protein is Deoxyguanosinetriphosphate triphosphohydrolase-like protein.